A 177-amino-acid polypeptide reads, in one-letter code: SAYSvFN domain-containing protein 1 (177 aa).

The Cytoplasmic portion of the chain corresponds to 1–100 (MADFQEQLRQ…CLKYTLWTVY (100 aa)). The span at 57 to 70 (SENSQDEAVTSSES) shows a compositional bias: polar residues. Positions 57 to 85 (SENSQDEAVTSSESELVPEEQPTRSTDHH) are disordered. The helical intramembrane region spans 101–121 (LLFWITLYVIAIKLSFGLVFL). The Cytoplasmic portion of the chain corresponds to 122 to 177 (MFSALFGIYFNTRTEPKKRNEMSAYSVFNKNCESIDGTLKAEQFEREIRYGSGSVR).

This sequence belongs to the SAYSD1 family.

The protein resides in the endoplasmic reticulum membrane. Its function is as follows. Ufmylation 'reader' component of a translocation-associated quality control pathway, a mechanism that takes place when a ribosome has stalled during translation, and which is required to degrade clogged substrates. Specifically recognizes and binds ufmylated ribosomes when a ribosome has stalled, promoting the transport of stalled nascent chain to lysosomes for degradation. The sequence is that of SAYSvFN domain-containing protein 1 from Drosophila melanogaster (Fruit fly).